Consider the following 226-residue polypeptide: Translation initiation factor IF-3 (226 aa).

The tract at residues 195-226 is disordered; sequence FVPLAPLSPEDLIEEPELESESDSDAEPESDN. Over residues 205–226 the composition is skewed to acidic residues; it reads DLIEEPELESESDSDAEPESDN.

The protein belongs to the IF-3 family. As to quaternary structure, monomer.

It is found in the cytoplasm. IF-3 binds to the 30S ribosomal subunit and shifts the equilibrium between 70S ribosomes and their 50S and 30S subunits in favor of the free subunits, thus enhancing the availability of 30S subunits on which protein synthesis initiation begins. In Chlorobium chlorochromatii (strain CaD3), this protein is Translation initiation factor IF-3.